We begin with the raw amino-acid sequence, 574 residues long: Protein misato (574 aa).

This sequence belongs to the misato family.

It localises to the mitochondrion. This is Protein misato (mst) from Drosophila melanogaster (Fruit fly).